A 289-amino-acid chain; its full sequence is Inorganic pyrophosphatase (289 aa).

Serine 2 bears the N-acetylserine mark. Residue lysine 57 is modified to N6-acetyllysine. Mg(2+) contacts are provided by aspartate 116, aspartate 121, and aspartate 153. The residue at position 228 (lysine 228) is an N6-acetyllysine. Serine 250 is modified (phosphoserine).

Belongs to the PPase family. As to quaternary structure, homodimer. Requires Mg(2+) as cofactor. As to expression, expressed ubiquitously.

It localises to the cytoplasm. It catalyses the reaction diphosphate + H2O = 2 phosphate + H(+). In Homo sapiens (Human), this protein is Inorganic pyrophosphatase (PPA1).